Here is a 274-residue protein sequence, read N- to C-terminus: 2,3,4,5-tetrahydropyridine-2,6-dicarboxylate N-succinyltransferase (274 aa).

Belongs to the transferase hexapeptide repeat family.

The protein localises to the cytoplasm. The catalysed reaction is (S)-2,3,4,5-tetrahydrodipicolinate + succinyl-CoA + H2O = (S)-2-succinylamino-6-oxoheptanedioate + CoA. Its pathway is amino-acid biosynthesis; L-lysine biosynthesis via DAP pathway; LL-2,6-diaminopimelate from (S)-tetrahydrodipicolinate (succinylase route): step 1/3. The polypeptide is 2,3,4,5-tetrahydropyridine-2,6-dicarboxylate N-succinyltransferase (Salmonella heidelberg (strain SL476)).